We begin with the raw amino-acid sequence, 202 residues long: ATP-dependent Clp protease proteolytic subunit (202 aa).

Serine 101 functions as the Nucleophile in the catalytic mechanism. Histidine 126 is an active-site residue.

The protein belongs to the peptidase S14 family. As to quaternary structure, component of the chloroplastic Clp protease core complex.

The protein localises to the plastid. The protein resides in the chloroplast stroma. The enzyme catalyses Hydrolysis of proteins to small peptides in the presence of ATP and magnesium. alpha-casein is the usual test substrate. In the absence of ATP, only oligopeptides shorter than five residues are hydrolyzed (such as succinyl-Leu-Tyr-|-NHMec, and Leu-Tyr-Leu-|-Tyr-Trp, in which cleavage of the -Tyr-|-Leu- and -Tyr-|-Trp bonds also occurs).. Its function is as follows. Cleaves peptides in various proteins in a process that requires ATP hydrolysis. Has a chymotrypsin-like activity. Plays a major role in the degradation of misfolded proteins. The chain is ATP-dependent Clp protease proteolytic subunit from Nuphar advena (Common spatterdock).